Reading from the N-terminus, the 359-residue chain is UPF0496 protein At3g57100 (359 aa).

A coiled-coil region spans residues 179–208 (HEELAKMVVKLEKTMKDIDKKLRRVRGRRA). Residues 214–234 (LLAPVIAVIFLSKLVAGLVPI) form a helical membrane-spanning segment.

It belongs to the UPF0496 family.

Its subcellular location is the membrane. This Arabidopsis thaliana (Mouse-ear cress) protein is UPF0496 protein At3g57100.